We begin with the raw amino-acid sequence, 211 residues long: MGQKVNPIGFRLGVIKTWDSKWYAEKDYAKLLHEDLKLRNFLKKRLYHSGVSKIEIERAAGKAKINIFTARPGLIIGKKGSEVETLKKELAKLTDKEVYLNIQEVRKPELDAQLVAENVAMQLERRIAFRRAMKKSVTSTLKFGAKGIRITCSGRLGGAEMSRTEWYREGRVPLHTLRADIDYGFAEAKTTYGIIGVKVLLFKGEVLSAKK.

Residues 38 to 106 (LRNFLKKRLY…EVYLNIQEVR (69 aa)) enclose the KH type-2 domain.

The protein belongs to the universal ribosomal protein uS3 family. Part of the 30S ribosomal subunit. Forms a tight complex with proteins S10 and S14.

Functionally, binds the lower part of the 30S subunit head. Binds mRNA in the 70S ribosome, positioning it for translation. The polypeptide is Small ribosomal subunit protein uS3 (Citrifermentans bemidjiense (strain ATCC BAA-1014 / DSM 16622 / JCM 12645 / Bem) (Geobacter bemidjiensis)).